A 309-amino-acid polypeptide reads, in one-letter code: tRNA pseudouridine synthase B (309 aa).

Asp51 functions as the Nucleophile in the catalytic mechanism.

Belongs to the pseudouridine synthase TruB family. Type 1 subfamily.

It catalyses the reaction uridine(55) in tRNA = pseudouridine(55) in tRNA. Functionally, responsible for synthesis of pseudouridine from uracil-55 in the psi GC loop of transfer RNAs. This Coxiella burnetii (strain Dugway 5J108-111) protein is tRNA pseudouridine synthase B.